The following is a 178-amino-acid chain: Large ribosomal subunit protein uL6 (178 aa).

This sequence belongs to the universal ribosomal protein uL6 family. As to quaternary structure, part of the 50S ribosomal subunit.

This protein binds to the 23S rRNA, and is important in its secondary structure. It is located near the subunit interface in the base of the L7/L12 stalk, and near the tRNA binding site of the peptidyltransferase center. The polypeptide is Large ribosomal subunit protein uL6 (Streptococcus pneumoniae serotype 19F (strain G54)).